A 366-amino-acid chain; its full sequence is MIKILADDRIPFVSELFGDFGELILKPGAHIQNRDLLAVNALLTRSITSVDSALLEGTAVEFVGSATAGFDHIDSTWLKKQSIHWAYAPGANATAVAEYVLHCVAYLHKKNLLPRKSATAAIIGVGHVGCVVSDRLRKIGFTVFHNDPPRAQLEKDFISVPLASLANVDLVCLHTPLVKTGNFPTYHLIDNRFLKMLKPGSVLLNAGRGAVIDNNALLQCDHVITCLDVWENEPTVNLQLLEKTTIATPHIAGYSKQAKLRATLMIYDAFLKYFHLSDTRRFSELQQLQETMTLNIQDGRNAEDILLTLFDPGRESQRMRETLAENPDQFEYLRRHFPLRNEFSAIQLTPTPSALLRKELDDWGFK.

Residues serine 46 and threonine 67 each contribute to the substrate site. NAD(+) is bound by residues aspartate 147 and threonine 175. Arginine 208 is a catalytic residue. Position 228 (aspartate 228) interacts with NAD(+). Glutamate 233 is an active-site residue. The active-site Proton donor is histidine 250. Position 253 (glycine 253) interacts with NAD(+). Tyrosine 254 contacts substrate.

The protein belongs to the D-isomer specific 2-hydroxyacid dehydrogenase family. PdxB subfamily. As to quaternary structure, homodimer.

It is found in the cytoplasm. It carries out the reaction 4-phospho-D-erythronate + NAD(+) = (R)-3-hydroxy-2-oxo-4-phosphooxybutanoate + NADH + H(+). The protein operates within cofactor biosynthesis; pyridoxine 5'-phosphate biosynthesis; pyridoxine 5'-phosphate from D-erythrose 4-phosphate: step 2/5. In terms of biological role, catalyzes the oxidation of erythronate-4-phosphate to 3-hydroxy-2-oxo-4-phosphonooxybutanoate. This chain is Erythronate-4-phosphate dehydrogenase, found in Coxiella burnetii (strain RSA 331 / Henzerling II).